Consider the following 486-residue polypeptide: Cobyric acid synthase (486 aa).

In terms of domain architecture, GATase cobBQ-type spans 248-439 (VLRIVVPALP…LHGLFDTPHA (192 aa)). Catalysis depends on cysteine 328, which acts as the Nucleophile. The active site involves histidine 431.

This sequence belongs to the CobB/CobQ family. CobQ subfamily.

The protein operates within cofactor biosynthesis; adenosylcobalamin biosynthesis. Functionally, catalyzes amidations at positions B, D, E, and G on adenosylcobyrinic A,C-diamide. NH(2) groups are provided by glutamine, and one molecule of ATP is hydrogenolyzed for each amidation. The chain is Cobyric acid synthase from Burkholderia mallei (strain ATCC 23344).